The primary structure comprises 379 residues: Cobalt-precorrin-5B C(1)-methyltransferase (379 aa).

Belongs to the CbiD family.

The enzyme catalyses Co-precorrin-5B + S-adenosyl-L-methionine = Co-precorrin-6A + S-adenosyl-L-homocysteine. It participates in cofactor biosynthesis; adenosylcobalamin biosynthesis; cob(II)yrinate a,c-diamide from sirohydrochlorin (anaerobic route): step 6/10. In terms of biological role, catalyzes the methylation of C-1 in cobalt-precorrin-5B to form cobalt-precorrin-6A. The polypeptide is Cobalt-precorrin-5B C(1)-methyltransferase (Salmonella choleraesuis (strain SC-B67)).